We begin with the raw amino-acid sequence, 447 residues long: Tubulin alpha-2 chain (447 aa).

Gln11, Glu71, Gly144, Thr145, Thr179, Asn206, and Asn228 together coordinate GTP. Residue Glu71 participates in Mg(2+) binding. The active site involves Glu254.

Belongs to the tubulin family. As to quaternary structure, dimer of alpha and beta chains. A typical microtubule is a hollow water-filled tube with an outer diameter of 25 nm and an inner diameter of 15 nM. Alpha-beta heterodimers associate head-to-tail to form protofilaments running lengthwise along the microtubule wall with the beta-tubulin subunit facing the microtubule plus end conferring a structural polarity. Microtubules usually have 13 protofilaments but different protofilament numbers can be found in some organisms and specialized cells. It depends on Mg(2+) as a cofactor. In terms of processing, undergoes a tyrosination/detyrosination cycle, the cyclic removal and re-addition of a C-terminal tyrosine residue by the enzymes tubulin tyrosine carboxypeptidase (TTCP) and tubulin tyrosine ligase (TTL), respectively.

The protein localises to the cytoplasm. Its subcellular location is the cytoskeleton. It carries out the reaction GTP + H2O = GDP + phosphate + H(+). Tubulin is the major constituent of microtubules, a cylinder consisting of laterally associated linear protofilaments composed of alpha- and beta-tubulin heterodimers. Microtubules grow by the addition of GTP-tubulin dimers to the microtubule end, where a stabilizing cap forms. Below the cap, tubulin dimers are in GDP-bound state, owing to GTPase activity of alpha-tubulin. This is Tubulin alpha-2 chain (TUBA2) from Eleusine indica (Goosegrass).